The sequence spans 548 residues: T-complex protein 1 subunit theta (548 aa).

The interval A528–A548 is disordered.

It belongs to the TCP-1 chaperonin family. Heterooligomeric complex.

Its subcellular location is the cytoplasm. Functionally, molecular chaperone; assists the folding of proteins upon ATP hydrolysis. Known to play a role, in vitro, in the folding of actin and tubulin. Required for correct subcellular localization of pgl-1. This chain is T-complex protein 1 subunit theta, found in Caenorhabditis briggsae.